Reading from the N-terminus, the 309-residue chain is Taste receptor type 2 member 31 (309 aa).

The Extracellular portion of the chain corresponds to 1-2; that stretch reads MT. A helical membrane pass occupies residues 3–23; sequence TFIPIIFSSLVMVMFVTGNFA. At 24 to 55 the chain is on the cytoplasmic side; the sequence is NGFIALVNSIESVKRQKISYADQILTALAVSR. The chain crosses the membrane as a helical span at residues 56–76; the sequence is IGLLWVLLLNWYSTVLNPAFY. At 77–100 the chain is on the extracellular side; it reads SVEVRTTAYNVWAVTGHFSNWLAT. A helical membrane pass occupies residues 101–121; that stretch reads SLSIFYLLKIANFSNLIFLHL. At 122 to 126 the chain is on the cytoplasmic side; it reads KRRVK. The chain crosses the membrane as a helical span at residues 127–147; that stretch reads SVILVMLLGPLLFLACQLFVI. The Extracellular segment spans residues 148–181; that stretch reads NMKEIVQTKEYEGNXTWKIKLRSAVYLSDATVTT. Asn-161 carries an N-linked (GlcNAc...) asparagine glycan. The chain crosses the membrane as a helical span at residues 182-202; that stretch reads LGNLVPFTLTLLCFLLLICSL. Over 203–229 the chain is Cytoplasmic; it reads CKHLKKMQLHGKGSQDPSMKVHIKALQ. A helical membrane pass occupies residues 230–250; the sequence is TVTSFLLLCAIYFLSIMISVW. Topologically, residues 251-259 are extracellular; sequence SLGSLKNKP. A helical transmembrane segment spans residues 260–280; it reads VFMFCKAMRFSYPSIHPFILI. Residues 281–309 lie on the Cytoplasmic side of the membrane; it reads WGNKKLKQTFLSVLQQVRYWVKGEKPSSP.

Belongs to the G-protein coupled receptor T2R family.

Its subcellular location is the membrane. Receptor that may play a role in the perception of bitterness and is gustducin-linked. May play a role in sensing the chemical composition of the gastrointestinal content. The activity of this receptor may stimulate alpha gustducin, mediate PLC-beta-2 activation and lead to the gating of TRPM5. The polypeptide is Taste receptor type 2 member 31 (TAS2R31) (Gorilla gorilla gorilla (Western lowland gorilla)).